Here is a 261-residue protein sequence, read N- to C-terminus: Glucosamine-6-phosphate deaminase (261 aa).

Catalysis depends on D67, which acts as the Proton acceptor; for enolization step. Residue N135 is the For ring-opening step of the active site. H137 functions as the Proton acceptor; for ring-opening step in the catalytic mechanism. The For ring-opening step role is filled by E142.

Belongs to the glucosamine/galactosamine-6-phosphate isomerase family. NagB subfamily. In terms of assembly, homohexamer.

It catalyses the reaction alpha-D-glucosamine 6-phosphate + H2O = beta-D-fructose 6-phosphate + NH4(+). The protein operates within amino-sugar metabolism; N-acetylneuraminate degradation; D-fructose 6-phosphate from N-acetylneuraminate: step 5/5. Functionally, catalyzes the reversible isomerization-deamination of glucosamine 6-phosphate (GlcN6P) to form fructose 6-phosphate (Fru6P) and ammonium ion. In Hahella chejuensis (strain KCTC 2396), this protein is Glucosamine-6-phosphate deaminase.